The sequence spans 637 residues: Mitochondrial Rho GTPase 1 (637 aa).

The Cytoplasmic segment spans residues 1-613 (MSDGETLADV…LRRVFYLSDS (613 aa)). Residues 7-184 (LADVRIVLIG…FYYAQKAVIY (178 aa)) form the Miro 1 domain. GTP-binding positions include 28–35 (SLLEDEWV), 74–78 (ISEMR), and 135–138 (LPSG). 2 consecutive EF-hand domains span residues 200–235 (RAKKALIRVFKICDRDNDGYLSDTELNDFQKLCFGI) and 320–355 (EGVQFVSALFEKYDEDKDGCLSPSELQNLFSVCSAP). D213, D215, D217, Y219, E224, D333, D335, D337, C339, and E344 together coordinate Ca(2+). Residues 436 to 601 (RKVFQCLVVG…FEQLAMMAVY (166 aa)) enclose the Miro 2 domain. GTP is bound by residues 445–452 (GAKDAGKT), 482–486 (KVKEE), and 549–552 (TKVE). Residues 614–634 (NLLSKITFGAAIVALAGFLVL) form a helical; Anchor for type IV membrane protein membrane-spanning segment. Over 635–637 (KNL) the chain is Mitochondrial intermembrane.

Belongs to the mitochondrial Rho GTPase family.

The protein localises to the mitochondrion outer membrane. Functionally, mitochondrial GTPase involved in mitochondrial trafficking. Probably involved in control of anterograde transport of mitochondria and their subcellular distribution. The protein is Mitochondrial Rho GTPase 1 of Caenorhabditis briggsae.